The chain runs to 711 residues: Hydroperoxide isomerase ALOXE3 (711 aa).

The PLAT domain occupies 2–119 (AVYRLCVTTG…TVELRPGTAR (118 aa)). Residues 120-711 (TICQDSLPLL…PPLIENSVSI (592 aa)) form the Lipoxygenase domain. Histidine 408, histidine 413, histidine 588, asparagine 592, and isoleucine 711 together coordinate Fe cation.

This sequence belongs to the lipoxygenase family. The cofactor is Fe cation. Predominantly expressed in skin.

The protein localises to the cytoplasm. It carries out the reaction a hydroperoxyeicosatetraenoate = a hydroxy-epoxy-eicosatetraenoate. It catalyses the reaction (12R)-hydroperoxy-(5Z,8Z,10E,14Z)-eicosatetraenoate = (8R)-hydroxy-(11R,12R)-epoxy-(5Z,9E,14Z)-eicosatrienoate. The enzyme catalyses (12S)-hydroperoxy-(5Z,8Z,10E,14Z)-eicosatetraenoate = (8R)-hydroxy-(11S,12S)-epoxy-(5Z,9E,14Z)-eicosatrienoate. The catalysed reaction is (12S)-hydroperoxy-(5Z,8Z,10E,14Z)-eicosatetraenoate = (10R)-hydroxy-(11S,12S)-epoxy-(5Z,8Z,14Z)-eicosatrienoate. It carries out the reaction (15S)-hydroperoxy-(5Z,8Z,11Z,13E)-eicosatetraenoate = (13R)-hydroxy-(14S,15S)-epoxy-(5Z,8Z,11Z)-eicosatrienoate. It catalyses the reaction (5S)-hydroperoxy-(6E,8Z,11Z,14Z)-eicosatetraenoate = 7R-hydroxy-5S,6S-epoxy-(8Z,11Z,14Z)-eicosatrienoate. The enzyme catalyses (13S)-hydroperoxy-(9Z,11E)-octadecadienoate = 11-hydroxy-(12S,13S)-epoxy-(9Z)-octadecenoate. The catalysed reaction is N-[omega-(9R)-hydroperoxy-(10E,12Z)-octadecadienoyloxy]acyl-beta-D-glucosyl-(1&lt;-&gt;1)-octadecasphing-4E-enine = a N-[omega-(9R,10R)-epoxy-(13R)-hydroxy-(11E)-octadecenoyloxy]acyl-beta-D-glucosyl-(1&lt;-&gt;1)-sphing-4E-enine. It carries out the reaction a N-[omega-(9R)-hydroperoxy-(10E,12Z)-octadecadienoyloxy]-acylsphin-4E-enine = a N-[omega-(9R,10R)-epoxy-(13R)-hydroxy-(11E)-octadecenoyloxy]-acylsphing-4E-enine. It catalyses the reaction a hydroperoxyeicosatetraenoate = an oxoeicosatetraenoate + H2O. The enzyme catalyses (12R)-hydroperoxy-(5Z,8Z,10E,14Z)-eicosatetraenoate = 12-oxo-(5Z,8Z,10E,14Z)-eicosatetraenoate + H2O. The catalysed reaction is (12S)-hydroperoxy-(5Z,8Z,10E,14Z)-eicosatetraenoate = 12-oxo-(5Z,8Z,10E,14Z)-eicosatetraenoate + H2O. It carries out the reaction (15S)-hydroperoxy-(5Z,8Z,11Z,13E)-eicosatetraenoate = 15-oxo-(5Z,8Z,11Z,13E)-eicosatetraenoate + H2O. It catalyses the reaction (13S)-hydroperoxy-(9Z,11E)-octadecadienoate = 13-oxo-(9Z,11E)-octadecadienoate + H2O. The enzyme catalyses (8S)-hydroperoxy-(5Z,9E,11Z,14Z)-eicosatetraenoate = (10R)-hydroxy-(8S,9S)-epoxy-(5Z,11Z,14Z)-eicosatrienoate. The catalysed reaction is (8R)-hydroperoxy-(5Z,9E,11Z,14Z)-eicosatetraenoate = 8-oxo-(5Z,9E,11Z,14Z)-eicosatetraenoate + H2O. It carries out the reaction (8S)-hydroperoxy-(5Z,9E,11Z,14Z)-eicosatetraenoate = 8-oxo-(5Z,9E,11Z,14Z)-eicosatetraenoate + H2O. The protein operates within lipid metabolism; hydroperoxy eicosatetraenoic acid biosynthesis. It participates in lipid metabolism; sphingolipid metabolism. Its activity is regulated as follows. Lipoxygenase activity is activated by 13(S)-HPODE leading to an active free ferric enzyme. The lipoxygenase and hydroperoxide isomerase activities are in competition and are reciprocally regulated by oxygen. The oxygen reacts with an epoxyallylic radical intermediate leading to an epoxyallylic peroxyl radical, which, due to its limited reactivity within the enzyme active site, it dissociates and leaves the enzyme in the activated free ferric state. Non-heme iron-containing lipoxygenase which is atypical in that it displays a prominent hydroperoxide isomerase activity and a reduced lipoxygenases activity. The hydroperoxide isomerase activity catalyzes the isomerization of hydroperoxides, derived from arachidonic and linoleic acid by ALOX12B, into hepoxilin-type epoxyalcohols and ketones. In presence of oxygen, oxygenates polyunsaturated fatty acids, including arachidonic acid, to produce fatty acid hydroperoxides. In the skin, acts downstream of ALOX12B on the linoleate moiety of esterified omega-hydroxyacyl-sphingosine (EOS) ceramides to produce an epoxy-ketone derivative, a crucial step in the conjugation of omega-hydroxyceramide to membrane proteins. Therefore plays a crucial role in the synthesis of corneocytes lipid envelope and the establishment of the skin barrier to water loss. In parallel, it may have a signaling function in barrier formation through the production of hepoxilins metabolites. Also plays a role in adipocyte differentiation through hepoxilin A3 and hepoxilin B3 production which in turn activate PPARG. Through the production of hepoxilins in the spinal cord, it may regulate inflammatory tactile allodynia. The sequence is that of Hydroperoxide isomerase ALOXE3 from Homo sapiens (Human).